Reading from the N-terminus, the 394-residue chain is Ribulose bisphosphate carboxylase large chain (394 aa).

Lys-5 is modified (N6,N6,N6-trimethyllysine). Positions 114 and 164 each coordinate substrate. The active-site Proton acceptor is Lys-166. Lys-168 serves as a coordination point for substrate. Lys-192, Asp-194, and Glu-195 together coordinate Mg(2+). N6-carboxylysine is present on Lys-192. The active-site Proton acceptor is the His-285. 3 residues coordinate substrate: Arg-286, His-318, and Ser-370.

Belongs to the RuBisCO large chain family. Type I subfamily. In terms of assembly, heterohexadecamer of 8 large chains and 8 small chains; disulfide-linked. The disulfide link is formed within the large subunit homodimers. It depends on Mg(2+) as a cofactor. Post-translationally, the disulfide bond which can form in the large chain dimeric partners within the hexadecamer appears to be associated with oxidative stress and protein turnover.

Its subcellular location is the plastid. The protein localises to the chloroplast. It carries out the reaction 2 (2R)-3-phosphoglycerate + 2 H(+) = D-ribulose 1,5-bisphosphate + CO2 + H2O. The catalysed reaction is D-ribulose 1,5-bisphosphate + O2 = 2-phosphoglycolate + (2R)-3-phosphoglycerate + 2 H(+). Its function is as follows. RuBisCO catalyzes two reactions: the carboxylation of D-ribulose 1,5-bisphosphate, the primary event in carbon dioxide fixation, as well as the oxidative fragmentation of the pentose substrate in the photorespiration process. Both reactions occur simultaneously and in competition at the same active site. The polypeptide is Ribulose bisphosphate carboxylase large chain (rbcL) (Alisma plantago-aquatica (Common water-plantain)).